We begin with the raw amino-acid sequence, 146 residues long: ATP synthase epsilon chain (146 aa).

The protein belongs to the ATPase epsilon chain family. F-type ATPases have 2 components, CF(1) - the catalytic core - and CF(0) - the membrane proton channel. CF(1) has five subunits: alpha(3), beta(3), gamma(1), delta(1), epsilon(1). CF(0) has three main subunits: a, b and c.

Its subcellular location is the cell inner membrane. Produces ATP from ADP in the presence of a proton gradient across the membrane. The chain is ATP synthase epsilon chain from Rhodospirillum centenum (strain ATCC 51521 / SW).